The sequence spans 557 residues: CCR4-NOT transcription complex subunit 6 (557 aa).

LRR repeat units lie at residues 52 to 73 (HLTALHLSDNSLSCIPSDIAKL), 75 to 96 (NLVYLDLSHNQIQSLPAELGNM), 98 to 120 (SLRELHLNYNQLRVLPFELGKLF), and 121 to 143 (QLQTLSLKGNPLTQDILNLCLEP). Residues 153 to 557 (LLDNLSGTAK…VNGIHLPGRR (405 aa)) form a nuclease domain region. E240 is a binding site for Mg(2+). Residues E240, E276, H361, and P366 each contribute to the substrate site. D412 provides a ligand contact to Mg(2+). D412 (proton donor/acceptor) is an active-site residue. Residues N414, N481, and F486 each contribute to the substrate site.

This sequence belongs to the CCR4/nocturin family. As to quaternary structure, component of the CCR4-NOT complex; distinct complexes seem to exist that differ in the participation of probably mutually exclusive catalytic subunits; the complex contains two deadenylase subunits, CNOT6 or CNOT6L, and CNOT7 or CNOT8. Interacts with CNOT7 and CNOT8. Interacts with UNR. Interacts with ZFP36L1 (via N-terminus). Interacts with ZNF335. Requires Mg(2+) as cofactor.

Its subcellular location is the cytoplasm. It localises to the nucleus. The catalysed reaction is Exonucleolytic cleavage of poly(A) to 5'-AMP.. Poly(A) nuclease with 3'-5' RNase activity. Catalytic component of the CCR4-NOT complex which is one of the major cellular mRNA deadenylases and is linked to various cellular processes including bulk mRNA degradation, miRNA-mediated repression, translational repression during translational initiation and general transcription regulation. Additional complex functions may be a consequence of its influence on mRNA expression. Involved in mRNA decay mediated by the major-protein-coding determinant of instability (mCRD) of the FOS gene in the cytoplasm. In the presence of ZNF335, enhances ligand-dependent transcriptional activity of nuclear hormone receptors. Mediates cell proliferation and cell survival and prevents cellular senescence. The chain is CCR4-NOT transcription complex subunit 6 (Cnot6) from Mus musculus (Mouse).